The sequence spans 662 residues: DNA topoisomerase 4 subunit B (662 aa).

ATP-binding positions include Y20, N60, D87, 129-135 (GLHGVGV), and K359. In terms of domain architecture, Toprim spans 439–553 (TELFIVEGDS…DGHLYLAKPP (115 aa)). Residues E445, D518, and D520 each contribute to the Mg(2+) site.

Belongs to the type II topoisomerase family. ParE type 1 subfamily. In terms of assembly, heterotetramer composed of ParC and ParE. Requires Mg(2+) as cofactor. Mn(2+) is required as a cofactor. The cofactor is Ca(2+).

The catalysed reaction is ATP-dependent breakage, passage and rejoining of double-stranded DNA.. Its function is as follows. Topoisomerase IV is essential for chromosome segregation. It relaxes supercoiled DNA. Performs the decatenation events required during the replication of a circular DNA molecule. In Rickettsia bellii (strain RML369-C), this protein is DNA topoisomerase 4 subunit B.